We begin with the raw amino-acid sequence, 2382 residues long: Serine/threonine-protein kinase WNK1 (2382 aa).

Disordered regions lie at residues 1-81 (MSGG…RFFR) and 95-203 (LPGL…QQDD). Residues serine 15 and serine 19 each carry the phosphoserine modification. Residues 50–66 (RTEEYRRRRHTMDKDSR) show a composition bias toward basic and acidic residues. Threonine 60 carries the phosphothreonine modification. Low complexity-rich tracts occupy residues 95–108 (LPGLPLSLPQPSIP) and 125–153 (VTATATSQVAQQPPAAAAPGEQAVAGPAP). 2 positions are modified to phosphoserine: serine 167 and serine 174. Residues 221–479 (LKFDIEIGRG…IKDLLNHAFF (259 aa)) form the Protein kinase domain. An ATP-binding site is contributed by serine 231. Positions 283 and 299 each coordinate chloride. Residues 301–304 (TELM) and lysine 351 contribute to the ATP site. The active-site Proton acceptor is the aspartate 368. Chloride is bound by residues leucine 369 and leucine 371. Phosphoserine; by autocatalysis occurs at positions 378 and 382. An autoinhibitory domain region spans residues 488-555 (ELAEEDDGEK…VCEGDHKTMA (68 aa)). Residues 573 to 588 (QLVREEQEKKKQEESS) are compositionally biased toward basic and acidic residues. Disordered stretches follow at residues 573–779 (QLVR…QPQA), 1018–1041 (QPGGSLAQAPTTSSQQAVLESTQG), and 1053–1119 (VAQT…SRPK). Over residues 598–614 (ASQTGIKQLPSASTGIP) the composition is skewed to polar residues. Positions 615 to 625 (TASTTSASVST) are enriched in low complexity. Positions 628 to 638 (EPEEPEADQHQ) are interaction with KLHL3. A compositionally biased stretch (polar residues) spans 637 to 689 (HQQLQYQQPSISVLSDGTVDSGQGSSVFTESRVSSQQTVSYGSQHEQAHSTGT). A compositionally biased stretch (low complexity) spans 709–779 (PPSSVAQGQS…TAQPVSQPQA (71 aa)). Positions 1025–1041 (QAPTTSSQQAVLESTQG) are enriched in polar residues. Over residues 1053–1077 (VAQTQATQPTTLASSVDSAHSDVAS) the composition is skewed to low complexity. A compositionally biased stretch (polar residues) spans 1080 to 1090 (SDGNENVPSSS). Positions 1098 to 1119 (TKRHYRKSVRSRSRHEKTSRPK) are enriched in basic residues. Residues 1257 to 1260 (RFIV) carry the RFXV motif 1 motif. Phosphoserine is present on serine 1261. 2 stretches are compositionally biased toward low complexity: residues 1457-1467 (SASAGGSTATP) and 1733-1745 (QVSTPVSTTTSGV). 2 disordered regions span residues 1457 to 1476 (SASAGGSTATPGPKPPAVVS) and 1733 to 1790 (QVST…TQSQ). Residue threonine 1848 is modified to Phosphothreonine. Positions 1859–1862 (RFQV) match the RFXV motif 2 motif. The tract at residues 1866–1948 (ADGAQKEGKN…QPTKVGRFQV (83 aa)) is disordered. Residues 1869–1884 (AQKEGKNKSEDAKSVH) show a composition bias toward basic and acidic residues. Residues 1887 to 1905 (SSTSESSVLSSSSPESTLV) are compositionally biased toward low complexity. The span at 1927-1940 (KTTASEAKSDTGQP) shows a compositional bias: polar residues. 2 short sequence motifs (RFXV motif) span residues 1945–1948 (RFQV) and 1957–1960 (RFSV). Residues serine 1978, serine 2002, serine 2011, serine 2012, serine 2027, serine 2029, and serine 2032 each carry the phosphoserine modification. Residues 1994-2003 (PKKEKPELSE) are compositionally biased toward basic and acidic residues. 2 disordered regions span residues 1994 to 2069 (PKKE…DIED) and 2101 to 2196 (LYTK…NLYS). Over residues 2035–2062 (QLSSKSLPSQNLSQSLSNSFNSSYMSSD) the composition is skewed to low complexity. Serine 2121 carries the phosphoserine modification. A compositionally biased stretch (basic residues) spans 2122-2134 (GRRRRPTKSKGSK). The span at 2135–2145 (SSRSSSLGNKS) shows a compositional bias: low complexity. Composition is skewed to polar residues over residues 2146–2167 (PQLSGNLSGQSAASVLHPQQTL) and 2175–2196 (ESGQNQLLQPLKPSPSSDNLYS). Positions 2241 to 2261 (SRKGTFTDDLHKLVDNWARDA) are amphipathic alpha-helix. Phosphoserine is present on residues serine 2270 and serine 2286. A disordered region spans residues 2332–2352 (PFGAQWSGTGGPAPQPLGQFQ). Serine 2370 and serine 2372 each carry phosphoserine.

Belongs to the protein kinase superfamily. Ser/Thr protein kinase family. WNK subfamily. As to quaternary structure, interacts with WNK3. Interacts with WNK4; inhibiting the activity of WNK4. Interacts with SGK1; promoting its activation. Associates with the mTORC2 complex. Interacts with UVRAG. Interacts (via amphipathic alpha-helix region) with EMC2; promoting the ER membrane protein complex assembly. In terms of assembly, interacts with isoform 1; inhibiting isoform 1 activity. It depends on Mg(2+) as a cofactor. Autophosphorylated at Ser-378 and Ser-382, promoting its activity. Autophosphorylation at Ser-382 is inhibited by intracellular calcium. Phosphorylation at Thr-60 increases ability to activate SGK1. Post-translationally, ubiquitinated by the BCR(KLHL3) complex, leading to its degradation. Also ubiquitinated by the BCR(KLHL2) complex. In terms of processing, may be O-glycosylated. In terms of tissue distribution, widely expressed, with highest levels observed in the testis, heart, kidney and skeletal muscle. Strong expression in dorsal root ganglia and spinal cord. As to expression, this isoform is kidney-specific and specifically expressed in the distal convoluted tubule (DCT) and connecting tubule (CNT) of the nephron.

Its subcellular location is the cytoplasm. It is found in the nucleus. The protein localises to the cytoskeleton. It localises to the spindle. It carries out the reaction L-seryl-[protein] + ATP = O-phospho-L-seryl-[protein] + ADP + H(+). The enzyme catalyses L-threonyl-[protein] + ATP = O-phospho-L-threonyl-[protein] + ADP + H(+). Its activity is regulated as follows. Activated in response to hyperosmotic stress: cell shrinkage promotes formation of a membraneless compartment that concentrates WNK1 with its substrates, OXSR1/OSR1 and STK39/SPAK. Activation requires autophosphorylation of Ser-382 and, to a lower extent, Ser-378. Autophosphorylation and subsequent activation is inhibited by increases in intracellular ionic strength: Cl(-) potently inhibits WNK1 kinase activity via direct binding. Also inhibited by K(+) ions. Inhibited by small compounds staurosporine, tyrphostin 47, as well as Src tyrosine kinase inhibitors PP1 and PP2. Its function is as follows. Serine/threonine-protein kinase component of the WNK1-SPAK/OSR1 kinase cascade, which acts as a key regulator of blood pressure and regulatory volume increase by promoting ion influx. WNK1 mediates regulatory volume increase in response to hyperosmotic stress by acting as a molecular crowding sensor, which senses cell shrinkage and mediates formation of a membraneless compartment by undergoing liquid-liquid phase separation. The membraneless compartment concentrates WNK1 with its substrates, OXSR1/OSR1 and STK39/SPAK, promoting WNK1-dependent phosphorylation and activation of downstream kinases OXSR1/OSR1 and STK39/SPAK. Following activation, OXSR1/OSR1 and STK39/SPAK catalyze phosphorylation of ion cotransporters SLC12A1/NKCC2, SLC12A2/NKCC1, SLC12A5/KCC2 and SLC12A6/KCC3, regulating their activity. Phosphorylation of Na-K-Cl cotransporters SLC12A2/NKCC1 and SLC12A2/NKCC1 promote their activation and ion influx; simultaneously, phosphorylation of K-Cl cotransporters SLC12A5/KCC2 and SLC12A6/KCC3 inhibit their activity, blocking ion efflux. Also acts as a regulator of angiogenesis in endothelial cells via activation of OXSR1/OSR1 and STK39/SPAK: activation of OXSR1/OSR1 regulates chemotaxis and invasion, while STK39/SPAK regulates endothelial cell proliferation. Also acts independently of the WNK1-SPAK/OSR1 kinase cascade by catalyzing phosphorylation of other substrates, such as SYT2, PCF11 and NEDD4L. Mediates phosphorylation of SYT2, regulating SYT2 association with phospholipids and membrane-binding. Regulates mRNA export in the nucleus by mediating phosphorylation of PCF11, thereby decreasing the association between PCF11 and POLR2A/RNA polymerase II and promoting mRNA export to the cytoplasm. Acts as a negative regulator of autophagy. Required for the abscission step during mitosis, independently of the WNK1-SPAK/OSR1 kinase cascade. May also play a role in actin cytoskeletal reorganization. Also acts as a scaffold protein independently of its protein kinase activity: negatively regulates cell membrane localization of various transporters and channels, such as SLC4A4, SLC26A6, SLC26A9, TRPV4 and CFTR. Involved in the regulation of epithelial Na(+) channel (ENaC) by promoting activation of SGK1 in a kinase-independent manner: probably acts as a scaffold protein that promotes the recruitment of SGK1 to the mTORC2 complex in response to chloride, leading to mTORC2-dependent phosphorylation and activation of SGK1. Acts as an assembly factor for the ER membrane protein complex independently of its protein kinase activity: associates with EMC2 in the cytoplasm via its amphipathic alpha-helix, and prevents EMC2 ubiquitination and subsequent degradation, thereby promoting EMC2 stabilization. Functionally, kinase-defective isoform specifically expressed in kidney, which acts as a dominant-negative regulator of the longer isoform 1. Does not directly inhibit WNK4 and has no direct effect on sodium and chloride ion transport. Down-regulates sodium-chloride cotransporter activity indirectly by inhibiting isoform 1, it associates with isoform 1 and attenuates its kinase activity. In kidney, may play an important role regulating sodium and potassium balance. This chain is Serine/threonine-protein kinase WNK1, found in Homo sapiens (Human).